The chain runs to 209 residues: Uridine kinase (209 aa).

Residue 12 to 19 (GGSGSGKT) coordinates ATP.

Belongs to the uridine kinase family.

It localises to the cytoplasm. The catalysed reaction is uridine + ATP = UMP + ADP + H(+). It carries out the reaction cytidine + ATP = CMP + ADP + H(+). Its pathway is pyrimidine metabolism; CTP biosynthesis via salvage pathway; CTP from cytidine: step 1/3. The protein operates within pyrimidine metabolism; UMP biosynthesis via salvage pathway; UMP from uridine: step 1/1. This chain is Uridine kinase, found in Listeria welshimeri serovar 6b (strain ATCC 35897 / DSM 20650 / CCUG 15529 / CIP 8149 / NCTC 11857 / SLCC 5334 / V8).